The sequence spans 418 residues: FAD-dependent monooxygenase fmqB (418 aa).

FAD is bound by residues V12 and R68. Residue R147 is part of the active site. Residues D272 and G285 each coordinate FAD.

The protein belongs to the paxM FAD-dependent monooxygenase family.

It localises to the cytoplasm. Its pathway is alkaloid biosynthesis. FAD-dependent monooxygenase; part of the gene cluster that mediates the biosynthesis of the antitumor fumiquinazolines that confer a dual-usage capability to defend against phagocytes in the environment and animal hosts. The simplest member is fumiquinazoline F (FQF) with a 6-6-6 tricyclic core derived from anthranilic acid (Ant), tryptophan (Trp), and alanine (Ala). The trimodular NRPS fmqA is responsible for FQF formation. Modules 1, 2 and 3 of fmqA are predicted to activate and load Ant, Trp and Ala, respectively, providing for the assembly of an Ant-Trp-Ala-S-enzyme intermediate that would undergo double cyclization for chain release and generation of the tricyclic 6-6-6 product fumiquinazoline F. The presence of an E domain predicted for module 2 of fmqA is consistent with epimerization of L-Trp to D-Trp during assembly to generate the R-stereocenter at C14 of FQF. The FAD-dependent monooxygenase fmqB and the monomodular NRPS fmqC then maturate FQF to FQA. FmqB oxidizes the 2',3'-double bond of the indole side chain of FQF, and fmqC activates L-Ala as the adenylate, installs it as the pantetheinyl thioester on its carrier protein domain, and acylates the oxidized indole for subsequent intramolecular cyclization to create the 6-5-5-imidazolindolone of FQA. The FAD-linked oxidoreductase fmqD introduces a third layer of scaffold complexity by converting FQA to the spirohemiaminal FQC, presumably by catalyzing the formation of a transient imine within the pyrazinone ring. FQC subsequently converts nonenzymatically to the known cyclic aminal FQD. This chain is FAD-dependent monooxygenase fmqB, found in Aspergillus fumigatus (strain ATCC MYA-4609 / CBS 101355 / FGSC A1100 / Af293) (Neosartorya fumigata).